A 291-amino-acid chain; its full sequence is MKNFVIDQNLKELTEHRTVELPVACYKTTINQNINGYIPLHWHDEIQFVLILKGIALFQINEEKIEVHEGDGLFINSGYLHMAEEKEGSDCTYICLNVSPHFVLSQELYSSYVQPYMFSTNLPYLFLAGNQQWAKNILDAVKKINQLIQQKTSLYEIDITMQLTLMWKNLVVNGFQLEYDQSEMIKSHRMKQMLNWIHLHYVEKITLEDIAKAGQLSRSECCRYFKRMLNKTPLRYVMDYRIQKSLLLLQHPESNVTEVSYQVGFNSTSYFISKFQQAMNMTPLSYKKMNS.

An HTH araC/xylS-type domain is found at 191–289 (KQMLNWIHLH…NMTPLSYKKM (99 aa)). 2 consecutive DNA-binding regions (H-T-H motif) follow at residues 208–229 (EDIA…KRML) and 256–279 (VTEV…QQAM).

This is an uncharacterized protein from Bacillus subtilis (strain 168).